We begin with the raw amino-acid sequence, 2138 residues long: DNA polymerase epsilon catalytic subunit B (2138 aa).

Positions 1224-1231 (EKRKWKMT) match the Nuclear localization signal 1 motif. Zn(2+) contacts are provided by Cys-2015, Cys-2018, Cys-2040, and Cys-2045. The CysA-type zinc-finger motif lies at 2015–2045 (CSNCGAYRDLDFCRDSALLTEKEWSCADPQC). Residues Cys-2076, Cys-2079, Cys-2091, and Cys-2093 each contribute to the [4Fe-4S] cluster site. The CysB motif motif lies at 2076–2093 (CNRCNQVKAAHLTEQCEC). The short motif at 2107 to 2114 (HKRIEIFL) is the Nuclear localization signal 2 element.

This sequence belongs to the DNA polymerase type-B family. As to quaternary structure, heterotetramer. Requires [4Fe-4S] cluster as cofactor. Mostly expressed at low levels in inflorescence (floral meristem and flowers until anthesis), and, to a lower extent, in seeds.

The protein resides in the nucleus. The enzyme catalyses DNA(n) + a 2'-deoxyribonucleoside 5'-triphosphate = DNA(n+1) + diphosphate. Its function is as follows. DNA polymerase II, which participates in chromosomal DNA replication. Involved in the determination of cell fate during plant embryogenesis. Contributes to the flowering time repression. This Arabidopsis thaliana (Mouse-ear cress) protein is DNA polymerase epsilon catalytic subunit B (POL2B).